A 116-amino-acid polypeptide reads, in one-letter code: Hydrogenase maturation factor HypA (116 aa).

Histidine 2 serves as a coordination point for Ni(2+). Residues cysteine 73, cysteine 76, cysteine 89, and cysteine 92 each contribute to the Zn(2+) site.

It belongs to the HypA/HybF family.

Involved in the maturation of [NiFe] hydrogenases. Required for nickel insertion into the metal center of the hydrogenase. The polypeptide is Hydrogenase maturation factor HypA (Chlorobium limicola (strain DSM 245 / NBRC 103803 / 6330)).